The sequence spans 489 residues: Acetyl-coenzyme A carboxylase carboxyl transferase subunit beta, chloroplastic (489 aa).

The 265-residue stretch at 225 to 489 (LWIQCDNCYG…FFPLNKNEIK (265 aa)) folds into the CoA carboxyltransferase N-terminal domain. Zn(2+)-binding residues include cysteine 229, cysteine 232, cysteine 245, and cysteine 248. Residues 229 to 248 (CDNCYGLKYKKVEMNVCEEC) form a C4-type zinc finger.

It belongs to the AccD/PCCB family. As to quaternary structure, acetyl-CoA carboxylase is a heterohexamer composed of biotin carboxyl carrier protein, biotin carboxylase and 2 subunits each of ACCase subunit alpha and ACCase plastid-coded subunit beta (accD). Zn(2+) is required as a cofactor.

It is found in the plastid. Its subcellular location is the chloroplast stroma. The catalysed reaction is N(6)-carboxybiotinyl-L-lysyl-[protein] + acetyl-CoA = N(6)-biotinyl-L-lysyl-[protein] + malonyl-CoA. The protein operates within lipid metabolism; malonyl-CoA biosynthesis; malonyl-CoA from acetyl-CoA: step 1/1. Component of the acetyl coenzyme A carboxylase (ACC) complex. Biotin carboxylase (BC) catalyzes the carboxylation of biotin on its carrier protein (BCCP) and then the CO(2) group is transferred by the transcarboxylase to acetyl-CoA to form malonyl-CoA. The protein is Acetyl-coenzyme A carboxylase carboxyl transferase subunit beta, chloroplastic of Brassica napus (Rape).